The chain runs to 367 residues: UDP-N-acetylglucosamine--N-acetylmuramyl-(pentapeptide) pyrophosphoryl-undecaprenol N-acetylglucosamine transferase (367 aa).

Residues 15 to 17 (TGG), asparagine 127, arginine 163, serine 191, isoleucine 249, and glutamine 294 contribute to the UDP-N-acetyl-alpha-D-glucosamine site.

It belongs to the glycosyltransferase 28 family. MurG subfamily.

The protein localises to the cell inner membrane. The catalysed reaction is di-trans,octa-cis-undecaprenyl diphospho-N-acetyl-alpha-D-muramoyl-L-alanyl-D-glutamyl-meso-2,6-diaminopimeloyl-D-alanyl-D-alanine + UDP-N-acetyl-alpha-D-glucosamine = di-trans,octa-cis-undecaprenyl diphospho-[N-acetyl-alpha-D-glucosaminyl-(1-&gt;4)]-N-acetyl-alpha-D-muramoyl-L-alanyl-D-glutamyl-meso-2,6-diaminopimeloyl-D-alanyl-D-alanine + UDP + H(+). It functions in the pathway cell wall biogenesis; peptidoglycan biosynthesis. Its function is as follows. Cell wall formation. Catalyzes the transfer of a GlcNAc subunit on undecaprenyl-pyrophosphoryl-MurNAc-pentapeptide (lipid intermediate I) to form undecaprenyl-pyrophosphoryl-MurNAc-(pentapeptide)GlcNAc (lipid intermediate II). The sequence is that of UDP-N-acetylglucosamine--N-acetylmuramyl-(pentapeptide) pyrophosphoryl-undecaprenol N-acetylglucosamine transferase from Burkholderia vietnamiensis (strain G4 / LMG 22486) (Burkholderia cepacia (strain R1808)).